Here is a 148-residue protein sequence, read N- to C-terminus: Lysozyme C-1 (148 aa).

An N-terminal signal peptide occupies residues 1–18 (MKALLTLGLLLLSVTAQA). The C-type lysozyme domain maps to 19–148 (KVYNRCELAR…LSQYIRNCGV (130 aa)). Disulfide bonds link C24–C146, C48–C134, C83–C99, and C95–C113. Catalysis depends on residues E53 and D71.

The protein belongs to the glycosyl hydrolase 22 family. As to quaternary structure, monomer. Expressed strongly only in small intestine.

Its subcellular location is the secreted. It carries out the reaction Hydrolysis of (1-&gt;4)-beta-linkages between N-acetylmuramic acid and N-acetyl-D-glucosamine residues in a peptidoglycan and between N-acetyl-D-glucosamine residues in chitodextrins.. Its function is as follows. Lysozymes have primarily a bacteriolytic function; those in tissues and body fluids are associated with the monocyte-macrophage system and enhance the activity of immunoagents. Lyz1 is active against a range of Gram-positive and Gram-negative bacteria. Less effective than Lyz2 in killing Gram-negative bacteria. Lyz1 and Lyz2 are equally effective in killing Gram-positive bacteria. The protein is Lysozyme C-1 (Lyz1) of Mus musculus (Mouse).